A 141-amino-acid polypeptide reads, in one-letter code: Large ribosomal subunit protein uL11 (141 aa).

The protein belongs to the universal ribosomal protein uL11 family. In terms of assembly, part of the ribosomal stalk of the 50S ribosomal subunit. Interacts with L10 and the large rRNA to form the base of the stalk. L10 forms an elongated spine to which L12 dimers bind in a sequential fashion forming a multimeric L10(L12)X complex. Post-translationally, one or more lysine residues are methylated.

Forms part of the ribosomal stalk which helps the ribosome interact with GTP-bound translation factors. The polypeptide is Large ribosomal subunit protein uL11 (Alkaliphilus metalliredigens (strain QYMF)).